A 208-amino-acid polypeptide reads, in one-letter code: Large ribosomal subunit protein uL4 (208 aa).

The disordered stretch occupies residues 58–77; that stretch reads RGGGRKPWRQKGTGRARQGS. Residues 60 to 71 show a composition bias toward basic residues; that stretch reads GGRKPWRQKGTG.

Belongs to the universal ribosomal protein uL4 family. In terms of assembly, part of the 50S ribosomal subunit.

In terms of biological role, one of the primary rRNA binding proteins, this protein initially binds near the 5'-end of the 23S rRNA. It is important during the early stages of 50S assembly. It makes multiple contacts with different domains of the 23S rRNA in the assembled 50S subunit and ribosome. Its function is as follows. Forms part of the polypeptide exit tunnel. The sequence is that of Large ribosomal subunit protein uL4 from Caldicellulosiruptor bescii (strain ATCC BAA-1888 / DSM 6725 / KCTC 15123 / Z-1320) (Anaerocellum thermophilum).